We begin with the raw amino-acid sequence, 726 residues long: Probable alpha-galactosidase G (726 aa).

Residues N23, N166, and N456 are each glycosylated (N-linked (GlcNAc...) asparagine). The Nucleophile role is filled by D485. D547 acts as the Proton donor in catalysis. N-linked (GlcNAc...) asparagine glycosylation is found at N657 and N673.

This sequence belongs to the glycosyl hydrolase 36 family. Homotetramer. Mg(2+) is required as a cofactor. Requires NAD(+) as cofactor.

It localises to the secreted. The enzyme catalyses Hydrolysis of terminal, non-reducing alpha-D-galactose residues in alpha-D-galactosides, including galactose oligosaccharides, galactomannans and galactolipids.. In terms of biological role, hydrolyzes a variety of simple alpha-D-galactoside as well as more complex molecules such as oligosaccharides and polysaccharides. Not active on paranitrophenyl-alpha-galactoside and raffinose. This Emericella nidulans (strain FGSC A4 / ATCC 38163 / CBS 112.46 / NRRL 194 / M139) (Aspergillus nidulans) protein is Probable alpha-galactosidase G (aglG).